The sequence spans 273 residues: GTP cyclohydrolase MptA (273 aa).

Belongs to the GTP cyclohydrolase IV family. Homodimer. Fe(2+) serves as cofactor.

It carries out the reaction GTP + H2O = 7,8-dihydroneopterin 2',3'-cyclic phosphate + formate + diphosphate + H(+). It functions in the pathway cofactor biosynthesis; 5,6,7,8-tetrahydromethanopterin biosynthesis. Its function is as follows. Converts GTP to 7,8-dihydro-D-neopterin 2',3'-cyclic phosphate, the first intermediate in the biosynthesis of coenzyme methanopterin. The chain is GTP cyclohydrolase MptA from Picrophilus torridus (strain ATCC 700027 / DSM 9790 / JCM 10055 / NBRC 100828 / KAW 2/3).